The following is a 318-amino-acid chain: MNLVRTAMLLAFMTALFMFVGFLIGGRAGMMIAFLIAAGMNFFSYWNSDRMVLSAYRAQQVDERNAPEFFAIVRDLARNAGLPMPKVYLYDSPQPNAFATGRNPENAAVAASTGLLQALSPEEVAGVMAHELAHIQNRDTLTMTITATLAGAISMLGNFAFFFGGNRDNNNNPLGFVGVLVAMIVAPLAAMLVQMAISRTREYSADRRGAEICGNPLWLASALGKIARGAAHVPNEDAERNPATAHMFIINPLSGERMDNLFSTHPDTENRIAALQEMAQSGMNVSTGPVRAVNPTRKSRSVPNTGRGGSQPPRGPWS.

2 helical membrane passes run T6–G26 and A28–S48. H130 is a binding site for Zn(2+). E131 is a catalytic residue. H134 contributes to the Zn(2+) binding site. Helical transmembrane passes span I145–G165 and P173–V193. E202 serves as a coordination point for Zn(2+). The disordered stretch occupies residues N284 to S318.

It belongs to the peptidase M48B family. Zn(2+) is required as a cofactor.

It is found in the cell inner membrane. The chain is Protease HtpX homolog from Rhizobium etli (strain CIAT 652).